The sequence spans 333 residues: Probable cytosolic iron-sulfur protein assembly protein ciao1-B (333 aa).

WD repeat units lie at residues 14-53 (HPDS…WECK), 59-98 (GHQR…FECL), 103-142 (GHEN…EYEC), 148-187 (SHTQ…WECR), 192-231 (GHTS…GGQE), 246-285 (FHGR…DPDQ), and 297-333 (AHTQ…QSGV).

It belongs to the WD repeat CIA1 family. Component of the CIA complex.

Functionally, key component of the cytosolic iron-sulfur protein assembly (CIA) complex, a multiprotein complex that mediates the incorporation of iron-sulfur cluster into extramitochondrial Fe/S proteins. This chain is Probable cytosolic iron-sulfur protein assembly protein ciao1-B (ciao1b), found in Salmo salar (Atlantic salmon).